The sequence spans 89 residues: Small ribosomal subunit protein uS15 (89 aa).

Belongs to the universal ribosomal protein uS15 family. Part of the 30S ribosomal subunit. Forms a bridge to the 50S subunit in the 70S ribosome, contacting the 23S rRNA.

Functionally, one of the primary rRNA binding proteins, it binds directly to 16S rRNA where it helps nucleate assembly of the platform of the 30S subunit by binding and bridging several RNA helices of the 16S rRNA. In terms of biological role, forms an intersubunit bridge (bridge B4) with the 23S rRNA of the 50S subunit in the ribosome. The sequence is that of Small ribosomal subunit protein uS15 from Laribacter hongkongensis (strain HLHK9).